Here is a 186-residue protein sequence, read N- to C-terminus: ATP synthase subunit b, chloroplastic (186 aa).

Residues 26–44 (ILETNLINLGVVIGTLLYF) form a helical membrane-spanning segment.

Belongs to the ATPase B chain family. As to quaternary structure, F-type ATPases have 2 components, F(1) - the catalytic core - and F(0) - the membrane proton channel. F(1) has five subunits: alpha(3), beta(3), gamma(1), delta(1), epsilon(1). F(0) has four main subunits: a(1), b(1), b'(1) and c(10-14). The alpha and beta chains form an alternating ring which encloses part of the gamma chain. F(1) is attached to F(0) by a central stalk formed by the gamma and epsilon chains, while a peripheral stalk is formed by the delta, b and b' chains.

It is found in the plastid. The protein resides in the chloroplast thylakoid membrane. In terms of biological role, f(1)F(0) ATP synthase produces ATP from ADP in the presence of a proton or sodium gradient. F-type ATPases consist of two structural domains, F(1) containing the extramembraneous catalytic core and F(0) containing the membrane proton channel, linked together by a central stalk and a peripheral stalk. During catalysis, ATP synthesis in the catalytic domain of F(1) is coupled via a rotary mechanism of the central stalk subunits to proton translocation. Functionally, component of the F(0) channel, it forms part of the peripheral stalk, linking F(1) to F(0). This is ATP synthase subunit b, chloroplastic from Chara vulgaris (Common stonewort).